The following is a 311-amino-acid chain: Porphobilinogen deaminase (311 aa).

Cys-242 carries the S-(dipyrrolylmethanemethyl)cysteine modification.

It belongs to the HMBS family. Monomer. Dipyrromethane is required as a cofactor.

It carries out the reaction 4 porphobilinogen + H2O = hydroxymethylbilane + 4 NH4(+). Its pathway is porphyrin-containing compound metabolism; protoporphyrin-IX biosynthesis; coproporphyrinogen-III from 5-aminolevulinate: step 2/4. Tetrapolymerization of the monopyrrole PBG into the hydroxymethylbilane pre-uroporphyrinogen in several discrete steps. The polypeptide is Porphobilinogen deaminase (hemC) (Neisseria meningitidis serogroup B (strain ATCC BAA-335 / MC58)).